We begin with the raw amino-acid sequence, 441 residues long: Glutamyl-tRNA reductase (441 aa).

Residues 58 to 61, serine 116, 121 to 123, and glutamine 127 each bind substrate; these read TCNR and EPD. Cysteine 59 acts as the Nucleophile in catalysis. 195 to 200 is a binding site for NADP(+); that stretch reads GAGMAG.

The protein belongs to the glutamyl-tRNA reductase family. As to quaternary structure, homodimer.

It carries out the reaction (S)-4-amino-5-oxopentanoate + tRNA(Glu) + NADP(+) = L-glutamyl-tRNA(Glu) + NADPH + H(+). It participates in porphyrin-containing compound metabolism; protoporphyrin-IX biosynthesis; 5-aminolevulinate from L-glutamyl-tRNA(Glu): step 1/2. Catalyzes the NADPH-dependent reduction of glutamyl-tRNA(Glu) to glutamate 1-semialdehyde (GSA). This Ignicoccus hospitalis (strain KIN4/I / DSM 18386 / JCM 14125) protein is Glutamyl-tRNA reductase.